The sequence spans 304 residues: Phosphoribosylaminoimidazole-succinocarboxamide synthase (304 aa).

The protein belongs to the SAICAR synthetase family.

The catalysed reaction is 5-amino-1-(5-phospho-D-ribosyl)imidazole-4-carboxylate + L-aspartate + ATP = (2S)-2-[5-amino-1-(5-phospho-beta-D-ribosyl)imidazole-4-carboxamido]succinate + ADP + phosphate + 2 H(+). The protein operates within purine metabolism; IMP biosynthesis via de novo pathway; 5-amino-1-(5-phospho-D-ribosyl)imidazole-4-carboxamide from 5-amino-1-(5-phospho-D-ribosyl)imidazole-4-carboxylate: step 1/2. This is Phosphoribosylaminoimidazole-succinocarboxamide synthase (ADE1) from Komagataella pastoris (Yeast).